Consider the following 179-residue polypeptide: ATP synthase subunit b, chloroplastic (179 aa).

Residues 35–51 (IVILGGGIFKLGSTALS) traverse the membrane as a helical segment.

This sequence belongs to the ATPase B chain family. F-type ATPases have 2 components, F(1) - the catalytic core - and F(0) - the membrane proton channel. F(1) has five subunits: alpha(3), beta(3), gamma(1), delta(1), epsilon(1). F(0) has four main subunits: a(1), b(1), b'(1) and c(10-14). The alpha and beta chains form an alternating ring which encloses part of the gamma chain. F(1) is attached to F(0) by a central stalk formed by the gamma and epsilon chains, while a peripheral stalk is formed by the delta, b and b' chains.

It localises to the plastid. The protein resides in the chloroplast thylakoid membrane. F(1)F(0) ATP synthase produces ATP from ADP in the presence of a proton or sodium gradient. F-type ATPases consist of two structural domains, F(1) containing the extramembraneous catalytic core and F(0) containing the membrane proton channel, linked together by a central stalk and a peripheral stalk. During catalysis, ATP synthesis in the catalytic domain of F(1) is coupled via a rotary mechanism of the central stalk subunits to proton translocation. Its function is as follows. Component of the F(0) channel, it forms part of the peripheral stalk, linking F(1) to F(0). In Emiliania huxleyi (Coccolithophore), this protein is ATP synthase subunit b, chloroplastic.